Consider the following 161-residue polypeptide: Nucleotide-binding protein SO_3815 (161 aa).

This sequence belongs to the YajQ family.

Its function is as follows. Nucleotide-binding protein. The chain is Nucleotide-binding protein SO_3815 from Shewanella oneidensis (strain ATCC 700550 / JCM 31522 / CIP 106686 / LMG 19005 / NCIMB 14063 / MR-1).